We begin with the raw amino-acid sequence, 1416 residues long: DNA-directed RNA polymerase subunit beta' (1416 aa).

Zn(2+) contacts are provided by cysteine 60, cysteine 62, cysteine 75, and cysteine 78. Residues aspartate 449, aspartate 451, and aspartate 453 each contribute to the Mg(2+) site. The Zn(2+) site is built by cysteine 781, cysteine 855, cysteine 862, and cysteine 865.

This sequence belongs to the RNA polymerase beta' chain family. As to quaternary structure, the RNAP catalytic core consists of 2 alpha, 1 beta, 1 beta' and 1 omega subunit. When a sigma factor is associated with the core the holoenzyme is formed, which can initiate transcription. Mg(2+) serves as cofactor. It depends on Zn(2+) as a cofactor.

The enzyme catalyses RNA(n) + a ribonucleoside 5'-triphosphate = RNA(n+1) + diphosphate. Its function is as follows. DNA-dependent RNA polymerase catalyzes the transcription of DNA into RNA using the four ribonucleoside triphosphates as substrates. The protein is DNA-directed RNA polymerase subunit beta' of Treponema pallidum (strain Nichols).